A 285-amino-acid polypeptide reads, in one-letter code: Small ribosomal subunit protein uS2 (285 aa).

Residues 229–285 (RHNGKSNAAEEPMAEWERELLEQHEEQKSQDAAPAEQSAPAAEAPAETEQKDAPAAE) form a disordered region. Basic and acidic residues predominate over residues 243–257 (EWERELLEQHEEQKS). A compositionally biased stretch (low complexity) spans 260 to 275 (AAPAEQSAPAAEAPAE). Over residues 276 to 285 (TEQKDAPAAE) the composition is skewed to basic and acidic residues.

It belongs to the universal ribosomal protein uS2 family.

This Kocuria rhizophila (strain ATCC 9341 / DSM 348 / NBRC 103217 / DC2201) protein is Small ribosomal subunit protein uS2.